Consider the following 239-residue polypeptide: MSFQRIAWGITGAGHFLDRSYQVFKELKLRNPELSVNTYVSRAAEEVLRMYGLEQKLVKISGGDYLEEIFRESEQGSSSPKVGRFALDRYDALFVTPATSNTVSKIAYGIADSLVTNAVSQAVKGRVPVFVVPVDIEGSIISEMPYNIDRKQCKHCETCPPRENCPHEAISEKNGVTDQIDLLKCKGCGICKELCPYNAIKGGPVEVLVRDVDMRNVEIVKSLQGITVLESPEAILELF.

4Fe-4S ferredoxin-type domains are found at residues 144–175 (MPYN…EKNG) and 176–205 (VTDQ…GGPV). C153, C156, C159, C165, C185, C188, C191, and C195 together coordinate [4Fe-4S] cluster.

In terms of assembly, homodimer. It depends on [4Fe-4S] cluster as a cofactor.

It catalyses the reaction 5,6,7,8-tetrahydromethanopterin + A = 7,8-dihydromethanopterin + AH2. It functions in the pathway cofactor biosynthesis; 5,6,7,8-tetrahydromethanopterin biosynthesis. In terms of biological role, involved in the biosynthesis of tetrahydromethanopterin, a coenzyme used in methanogenesis. Catalyzes the reduction of dihydromethanopterin (H(2)MPT) to tetrahydromethanopterin (H(4)MPT). Ferredoxin may serve as an electron donor. The protein is Dihydromethanopterin reductase (acceptor) of Methanosarcina mazei (strain ATCC BAA-159 / DSM 3647 / Goe1 / Go1 / JCM 11833 / OCM 88) (Methanosarcina frisia).